The sequence spans 681 residues: Peroxisomal acyl-coenzyme A oxidase 2 (681 aa).

2 positions are modified to phosphoserine: serine 3 and serine 9. Residues lysine 66, lysine 137, lysine 303, lysine 453, lysine 561, and lysine 667 each carry the N6-succinyllysine modification. The Microbody targeting signal motif lies at 679–681; that stretch reads HKM.

The protein belongs to the acyl-CoA oxidase family. Homodimer. The cofactor is FAD. Most abundant in liver. Also expressed in kidney. Not present in any other tissues tested.

It localises to the peroxisome. The catalysed reaction is (25R)-3alpha,7alpha,12alpha-trihydroxy-5beta-cholestan-26-oyl-CoA + A + H2O = (24R,25R)-3alpha,7alpha,12alpha,24-tetrahydroxy-5beta-cholestan-26-oyl-CoA + AH2. It catalyses the reaction (25S)-3alpha,7alpha,12alpha-trihydroxy-5beta-cholestan-26-oyl-CoA + O2 = (24E)-3alpha,7alpha,12alpha-trihydroxy-5beta-cholest-24-en-26-oyl-CoA + H2O2. Oxidizes the CoA esters of the bile acid intermediates di- and tri-hydroxycoprostanic acids. Capable of oxidizing short as well as long chain 2-methyl branched fatty acids. This is Peroxisomal acyl-coenzyme A oxidase 2 from Rattus norvegicus (Rat).